Reading from the N-terminus, the 197-residue chain is NADH-quinone oxidoreductase subunit B (197 aa).

Positions 63, 64, 129, and 159 each coordinate [4Fe-4S] cluster.

Belongs to the complex I 20 kDa subunit family. In terms of assembly, NDH-1 is composed of 14 different subunits. Subunits NuoB, C, D, E, F, and G constitute the peripheral sector of the complex. [4Fe-4S] cluster serves as cofactor.

Its subcellular location is the cell inner membrane. It carries out the reaction a quinone + NADH + 5 H(+)(in) = a quinol + NAD(+) + 4 H(+)(out). In terms of biological role, NDH-1 shuttles electrons from NADH, via FMN and iron-sulfur (Fe-S) centers, to quinones in the respiratory chain. The immediate electron acceptor for the enzyme in this species is believed to be a menaquinone. Couples the redox reaction to proton translocation (for every two electrons transferred, four hydrogen ions are translocated across the cytoplasmic membrane), and thus conserves the redox energy in a proton gradient. This is NADH-quinone oxidoreductase subunit B from Bacteroides thetaiotaomicron (strain ATCC 29148 / DSM 2079 / JCM 5827 / CCUG 10774 / NCTC 10582 / VPI-5482 / E50).